Consider the following 177-residue polypeptide: Large ribosomal subunit protein uL6 (177 aa).

Belongs to the universal ribosomal protein uL6 family. In terms of assembly, part of the 50S ribosomal subunit.

Its function is as follows. This protein binds to the 23S rRNA, and is important in its secondary structure. It is located near the subunit interface in the base of the L7/L12 stalk, and near the tRNA binding site of the peptidyltransferase center. The polypeptide is Large ribosomal subunit protein uL6 (Sphingopyxis alaskensis (strain DSM 13593 / LMG 18877 / RB2256) (Sphingomonas alaskensis)).